The sequence spans 262 residues: Adenosylcobinamide-GDP ribazoletransferase (262 aa).

8 consecutive transmembrane segments (helical) span residues 4 to 26 (AWNG…SIAW), 37 to 57 (CMPL…ALFS), 59 to 79 (FSFS…IWMA), 112 to 132 (VGAF…LFLY), 139 to 159 (IPPA…AWLL), 183 to 203 (AIWA…STAI), 205 to 225 (VQTG…AKPW), and 237 to 257 (VLGA…WLLH).

This sequence belongs to the CobS family. Requires Mg(2+) as cofactor.

It localises to the cell membrane. The catalysed reaction is alpha-ribazole + adenosylcob(III)inamide-GDP = adenosylcob(III)alamin + GMP + H(+). It carries out the reaction alpha-ribazole 5'-phosphate + adenosylcob(III)inamide-GDP = adenosylcob(III)alamin 5'-phosphate + GMP + H(+). The protein operates within cofactor biosynthesis; adenosylcobalamin biosynthesis; adenosylcobalamin from cob(II)yrinate a,c-diamide: step 7/7. Functionally, joins adenosylcobinamide-GDP and alpha-ribazole to generate adenosylcobalamin (Ado-cobalamin). Also synthesizes adenosylcobalamin 5'-phosphate from adenosylcobinamide-GDP and alpha-ribazole 5'-phosphate. This is Adenosylcobinamide-GDP ribazoletransferase from Geobacillus kaustophilus (strain HTA426).